A 180-amino-acid polypeptide reads, in one-letter code: Inner membrane-spanning protein YciB (180 aa).

A run of 5 helical transmembrane segments spans residues 22-42 (IYVASGALVAATAVALVLTWL), 50-70 (MTLITFIMVAIFGTLTLVFHN), 76-96 (WKVTVIYTLFALALLISQVVL), 121-141 (AAWALFFLGCGLANIYVAFWL), and 149-169 (FKVFGLTALTLVFTLLSGIYI).

It belongs to the YciB family.

It localises to the cell inner membrane. Plays a role in cell envelope biogenesis, maintenance of cell envelope integrity and membrane homeostasis. The sequence is that of Inner membrane-spanning protein YciB from Edwardsiella ictaluri (strain 93-146).